Reading from the N-terminus, the 886-residue chain is Adhesion G protein-coupled receptor E1 (886 aa).

A signal peptide spans 1–20 (MRGFNLLLFWGCCVMHSWEG). Residues 21–599 (HIRPTRKPNT…IMASGELTMD (579 aa)) lie on the Extracellular side of the membrane. The EGF-like 1 domain occupies 31 to 79 (KGNNCRDSTLCPAYATCTNTVDSYYCACKQGFLSSNGQNHFKDPGVRCK). 18 cysteine pairs are disulfide-bonded: Cys35-Cys47, Cys41-Cys56, Cys58-Cys78, Cys84-Cys97, Cys91-Cys106, Cys108-Cys130, Cys136-Cys148, Cys142-Cys157, Cys159-Cys170, Cys176-Cys188, Cys182-Cys197, Cys199-Cys219, Cys225-Cys235, Cys229-Cys244, Cys246-Cys266, Cys272-Cys285, Cys279-Cys294, and Cys296-Cys315. One can recognise an EGF-like 2; calcium-binding domain in the interval 80–131 (DIDECSQSPQPCGPNSSCKNLSGRYKCSCLDGFSSPTGNDWVPGKPGNFSCT). N-linked (GlcNAc...) asparagine glycans are attached at residues Asn94, Asn99, and Asn127. One can recognise an EGF-like 3; calcium-binding domain in the interval 132-171 (DINECLTSSVCPEHSDCVNSMGSYSCSCQVGFISRNSTCE). N-linked (GlcNAc...) asparagine glycosylation is present at Asn167. The EGF-like 4; calcium-binding domain occupies 172–220 (DVDECADPRACPEHATCNNTVGNYSCFCNPGFESSSGHLSFQGLKASCE). Asn189 and Asn194 each carry an N-linked (GlcNAc...) asparagine glycan. Residues 221–267 (DIDECTEMCPINSTCTNTPGSYFCTCHPGFAPSNGQLNFTDQGVECR) enclose the EGF-like 5; calcium-binding domain. Asn232 and Asn258 each carry an N-linked (GlcNAc...) asparagine glycan. The EGF-like 6; calcium-binding domain occupies 268–316 (DIDECRQDPSTCGPNSICTNALGSYSCGCIAGFHPNPEGSQKDGNFSCQ). N-linked (GlcNAc...) asparagine glycosylation is found at Asn312, Asn366, Asn375, and Asn448. The 167-residue stretch at 431–597 (EYLDIESKVI…AVIMASGELT (167 aa)) folds into the GAIN-B domain. 2 disulfide bridges follow: Cys550–Cys579 and Cys567–Cys581. Residues 550-597 (CVSWSTDVKGGRWTSFGCVILEASETYTICSCNQMANLAVIMASGELT) form a GPS region. Residues 600–627 (FSLYIISHVGIIISLVCLVLAIATFLLC) form a helical membrane-spanning segment. The Cytoplasmic segment spans residues 628-634 (RSIRNHN). The helical transmembrane segment at 635 to 656 (TYLHLHLCVCLLLAKTLFLAGI) threads the bilayer. At 657 to 666 (HKTDNKMGCA) the chain is on the extracellular side. Residues 667–690 (IIAGFLHYLFLACFFWMLVEAVIL) form a helical membrane-spanning segment. Residues 691 to 709 (FLMVRNLKVVNYFSSRNIK) lie on the Cytoplasmic side of the membrane. Residues 710–731 (MLHICAFGYGLPMLVVVISASV) form a helical membrane-spanning segment. Residues 732 to 747 (QPQGYGMHNRCWLNTE) lie on the Extracellular side of the membrane. A helical membrane pass occupies residues 748–776 (TGFIWSFLGPVCTVIVINSLLLTWTLWIL). Topologically, residues 777–794 (RQRLSSVNAEVSTLKDTR) are cytoplasmic. A helical transmembrane segment spans residues 795-814 (LLTFKAFAQLFILGCSWVLG). The Extracellular segment spans residues 815–829 (IFQIGPVAGVMAYLF). Residues 830 to 852 (TIINSLQGAFIFLIHCLLNGQVR) traverse the membrane as a helical segment. The Cytoplasmic segment spans residues 853 to 886 (EEYKRWITGKTKPSSQSQTSRILLSSMPSASKTG). A disordered region spans residues 862–886 (KTKPSSQSQTSRILLSSMPSASKTG). The span at 863 to 886 (TKPSSQSQTSRILLSSMPSASKTG) shows a compositional bias: polar residues.

The protein belongs to the G-protein coupled receptor 2 family. Adhesion G-protein coupled receptor (ADGR) subfamily. As to expression, expression is restricted to eosinophils.

Its subcellular location is the cell membrane. Orphan receptor involved in cell adhesion and probably in cell-cell interactions specifically involving cells of the immune system. May play a role in regulatory T-cells (Treg) development. This is Adhesion G protein-coupled receptor E1 from Homo sapiens (Human).